A 65-amino-acid chain; its full sequence is UPF0434 protein BH12860 (65 aa).

This sequence belongs to the UPF0434 family.

The polypeptide is UPF0434 protein BH12860 (Bartonella henselae (strain ATCC 49882 / DSM 28221 / CCUG 30454 / Houston 1) (Rochalimaea henselae)).